Here is a 381-residue protein sequence, read N- to C-terminus: MSLSGLRKQFNKANQYLSETMGAAEPTKLDDVFNEMEKNVDTTYNLITDLVAGTNEYLQPNPATRAKMATQVALSKVRGTTKTSPYPQTEGMLADVMQKYGQQLGDNSDLGKSLNDAAETYRQMADIKYQMEDNVKQNFLDPLTHLQNNELKDVNHHRTKLKGRRLDYDCKKRQQRRDDEMIQAEEKLEESKRLAEMSMFNVLSNDVEQISQLRALIEAQLDFHRQTAQCLENLQQQLGHRIKDAAARPREEHVPLSVLANESRTPRSSFRSPAPSDMSHNSTAAAAFKMPPQNGGGITQAPPSYQGPPPGGLPPPLSQQQKPQCRALFDFDAQSEGELDFKEGTLIELVSQIDENWYEGRVNGKTGLFPVTYVQVLVPLK.

Residues 1–21 (MSLSGLRKQFNKANQYLSETM) are membrane-binding amphipathic helix. One can recognise a BAR domain in the interval 18–247 (SETMGAAEPT…LGHRIKDAAA (230 aa)). A coiled-coil region spans residues 170-238 (CKKRQQRRDD…QCLENLQQQL (69 aa)). The segment at 246–323 (AARPREEHVP…PPPLSQQQKP (78 aa)) is disordered. Over residues 260–271 (ANESRTPRSSFR) the composition is skewed to polar residues. Residues 305–317 (YQGPPPGGLPPPL) show a composition bias toward pro residues. One can recognise an SH3 domain in the interval 320–379 (QQKPQCRALFDFDAQSEGELDFKEGTLIELVSQIDENWYEGRVNGKTGLFPVTYVQVLVP).

Belongs to the endophilin family. May form a homodimer (via the BAR domain). As to expression, expressed in neurons and posterior intestine.

The protein resides in the synapse. The protein localises to the cytoplasmic vesicle. It localises to the secretory vesicle. Its subcellular location is the synaptic vesicle. It is found in the membrane. Its function is as follows. Involved in synaptic vesicle (SV) recycling in neurons probably by regulating clathrin-mediated endocytosis. By controlling SV endocytosis, regulates the rate of excitatory postsynaptic currents (EPSCs) at neuromuscular junctions and thus locomotion. In a similar manner, involved in necrotic neuronal cell death induced by abnormal hyperactivation of ion channels. Plays a minor role in responses to mechanical stimuli. Plays a minor role in unc-26/synaptojanin localization to synapses. In Caenorhabditis elegans, this protein is Endophilin-A homolog.